A 417-amino-acid chain; its full sequence is UPF0761 membrane protein Daci_4966 (417 aa).

6 helical membrane-spanning segments follow: residues 49-69, 106-126, 146-166, 187-207, 235-255, and 256-276; these read VLAL…FPIF, QLGM…ILTI, VLIY…SLVL, FIFD…LYHY, ALGL…TFAT, and LPIL…GAVV.

It belongs to the UPF0761 family.

It localises to the cell inner membrane. This is UPF0761 membrane protein Daci_4966 from Delftia acidovorans (strain DSM 14801 / SPH-1).